The primary structure comprises 447 residues: Probable glycine dehydrogenase (decarboxylating) subunit 1 (447 aa).

It belongs to the GcvP family. N-terminal subunit subfamily. The glycine cleavage system is composed of four proteins: P, T, L and H. In this organism, the P 'protein' is a heterodimer of two subunits.

It carries out the reaction N(6)-[(R)-lipoyl]-L-lysyl-[glycine-cleavage complex H protein] + glycine + H(+) = N(6)-[(R)-S(8)-aminomethyldihydrolipoyl]-L-lysyl-[glycine-cleavage complex H protein] + CO2. Its function is as follows. The glycine cleavage system catalyzes the degradation of glycine. The P protein binds the alpha-amino group of glycine through its pyridoxal phosphate cofactor; CO(2) is released and the remaining methylamine moiety is then transferred to the lipoamide cofactor of the H protein. This Metallosphaera sedula (strain ATCC 51363 / DSM 5348 / JCM 9185 / NBRC 15509 / TH2) protein is Probable glycine dehydrogenase (decarboxylating) subunit 1.